Reading from the N-terminus, the 661-residue chain is Bifunctional polymyxin resistance protein ArnA (661 aa).

The segment at 1–304 (MKAVVFAYHD…ALGLVSGAVI (304 aa)) is formyltransferase ArnAFT. His104 functions as the Proton donor; for formyltransferase activity in the catalytic mechanism. (6R)-10-formyltetrahydrofolate contacts are provided by residues Arg114 and 136–140 (VNRAD). The tract at residues 314–661 (RRTRVLILGV…TVELVDDKNP (348 aa)) is dehydrogenase ArnADH. Residues Asp347 and 368–369 (DI) contribute to the NAD(+) site. UDP-alpha-D-glucuronate is bound by residues Ala393, Tyr398, and 432-433 (TS). Residue Glu434 is the Proton acceptor; for decarboxylase activity of the active site. Residues Arg460, Asn492, 526-535 (KLIEGGKQKR), and Tyr613 each bind UDP-alpha-D-glucuronate. Arg619 functions as the Proton donor; for decarboxylase activity in the catalytic mechanism.

In the N-terminal section; belongs to the Fmt family. UDP-L-Ara4N formyltransferase subfamily. This sequence in the C-terminal section; belongs to the NAD(P)-dependent epimerase/dehydratase family. UDP-glucuronic acid decarboxylase subfamily. As to quaternary structure, homohexamer, formed by a dimer of trimers.

The enzyme catalyses UDP-alpha-D-glucuronate + NAD(+) = UDP-beta-L-threo-pentopyranos-4-ulose + CO2 + NADH. It catalyses the reaction UDP-4-amino-4-deoxy-beta-L-arabinose + (6R)-10-formyltetrahydrofolate = UDP-4-deoxy-4-formamido-beta-L-arabinose + (6S)-5,6,7,8-tetrahydrofolate + H(+). It functions in the pathway nucleotide-sugar biosynthesis; UDP-4-deoxy-4-formamido-beta-L-arabinose biosynthesis; UDP-4-deoxy-4-formamido-beta-L-arabinose from UDP-alpha-D-glucuronate: step 1/3. It participates in nucleotide-sugar biosynthesis; UDP-4-deoxy-4-formamido-beta-L-arabinose biosynthesis; UDP-4-deoxy-4-formamido-beta-L-arabinose from UDP-alpha-D-glucuronate: step 3/3. Its pathway is bacterial outer membrane biogenesis; lipopolysaccharide biosynthesis. Functionally, bifunctional enzyme that catalyzes the oxidative decarboxylation of UDP-glucuronic acid (UDP-GlcUA) to UDP-4-keto-arabinose (UDP-Ara4O) and the addition of a formyl group to UDP-4-amino-4-deoxy-L-arabinose (UDP-L-Ara4N) to form UDP-L-4-formamido-arabinose (UDP-L-Ara4FN). The modified arabinose is attached to lipid A and is required for resistance to polymyxin and cationic antimicrobial peptides. This chain is Bifunctional polymyxin resistance protein ArnA, found in Klebsiella pneumoniae subsp. pneumoniae (strain ATCC 700721 / MGH 78578).